The following is a 125-amino-acid chain: Outer membrane protein assembly factor BamE (125 aa).

An N-terminal signal peptide occupies residues 1–17; that stretch reads MNKTLILALSALLGLAA. Cys-18 carries N-palmitoyl cysteine lipidation. Cys-18 carries S-diacylglycerol cysteine lipidation.

It belongs to the BamE family. In terms of assembly, part of the Bam complex.

Its subcellular location is the cell outer membrane. Functionally, part of the outer membrane protein assembly complex, which is involved in assembly and insertion of beta-barrel proteins into the outer membrane. The sequence is that of Outer membrane protein assembly factor BamE from Neisseria meningitidis serogroup B (strain ATCC BAA-335 / MC58).